The following is a 177-amino-acid chain: MKQKLQALDRAIKRFNDFPTPGILFYDITPIFLNSELFEFVLEQMAQFIQEVKADGIVCPEARGFIFGGALASKTKLPLVLVRKPHKLSGELARETYDLEYRQNSILEMRVDALENCKRCVIVDDLLATAGTVAAIDKLIARLGSQTVGYCFLIELQKLHGKAKLQPNVATKILLHY.

This sequence belongs to the purine/pyrimidine phosphoribosyltransferase family. In terms of assembly, homodimer.

The protein localises to the cytoplasm. It carries out the reaction AMP + diphosphate = 5-phospho-alpha-D-ribose 1-diphosphate + adenine. It functions in the pathway purine metabolism; AMP biosynthesis via salvage pathway; AMP from adenine: step 1/1. Its function is as follows. Catalyzes a salvage reaction resulting in the formation of AMP, that is energically less costly than de novo synthesis. This Mycoplasma pneumoniae (strain ATCC 29342 / M129 / Subtype 1) (Mycoplasmoides pneumoniae) protein is Adenine phosphoribosyltransferase.